We begin with the raw amino-acid sequence, 208 residues long: MARYTGPSCRLCRRENMELFLKGERCYTDKCAIKRRNYPPGQHGQGRPKVSNYGVQLREKQKVRRIYGILEKQFRSYFQEADRLKGVTGENLLSLLERRLDNVVYRLGFAASRTEARILVRHNHFTLNGKKANIPSIQLRAGDVVELKEKSRKIACINESLDAVVRRGIPQWLELEKDAYKGVVKTLPVREDITMPIQEQLIVELYSK.

In terms of domain architecture, S4 RNA-binding spans 98–158; it reads RRLDNVVYRL…EKSRKIACIN (61 aa).

The protein belongs to the universal ribosomal protein uS4 family. In terms of assembly, part of the 30S ribosomal subunit. Contacts protein S5. The interaction surface between S4 and S5 is involved in control of translational fidelity.

In terms of biological role, one of the primary rRNA binding proteins, it binds directly to 16S rRNA where it nucleates assembly of the body of the 30S subunit. Its function is as follows. With S5 and S12 plays an important role in translational accuracy. The chain is Small ribosomal subunit protein uS4 from Geobacter sulfurreducens (strain ATCC 51573 / DSM 12127 / PCA).